Here is a 232-residue protein sequence, read N- to C-terminus: Nucleolar protein 16 (232 aa).

A compositionally biased stretch (basic residues) spans 1 to 14 (MGRELQKRKKRSSR). 2 disordered regions span residues 1–20 (MGRELQKRKKRSSRAKVQTH) and 113–161 (RSDN…QSSR). The span at 132–154 (EEPKPKNPTHDIEWHGISDDRQE) shows a compositional bias: basic and acidic residues.

It belongs to the NOP16 family. As to quaternary structure, component of the pre-66S ribosomal particle.

Its subcellular location is the nucleus. The protein resides in the nucleolus. Involved in the biogenesis of the 60S ribosomal subunit. The chain is Nucleolar protein 16 (nop-16) from Neurospora crassa (strain ATCC 24698 / 74-OR23-1A / CBS 708.71 / DSM 1257 / FGSC 987).